The chain runs to 313 residues: Peroxidase 57 (313 aa).

Positions 1–22 are cleaved as a signal peptide; sequence MMKGAKFSSLLVLFFIFPIAFA. Cystine bridges form between Cys-33–Cys-109, Cys-66–Cys-71, Cys-115–Cys-309, and Cys-192–Cys-224. His-64 (proton acceptor) is an active-site residue. Residues Asp-65, Val-68, Gly-70, Asp-72, and Ser-74 each contribute to the Ca(2+) site. Position 155 (Pro-155) interacts with substrate. His-185 lines the heme b pocket. Thr-186 contacts Ca(2+). 3 residues coordinate Ca(2+): Asp-233, Ser-236, and Asp-241.

It belongs to the peroxidase family. Classical plant (class III) peroxidase subfamily. Heme b is required as a cofactor. Ca(2+) serves as cofactor. Mainly expressed in roots.

The protein resides in the secreted. The enzyme catalyses 2 a phenolic donor + H2O2 = 2 a phenolic radical donor + 2 H2O. Its function is as follows. Removal of H(2)O(2), oxidation of toxic reductants, biosynthesis and degradation of lignin, suberization, auxin catabolism, response to environmental stresses such as wounding, pathogen attack and oxidative stress. These functions might be dependent on each isozyme/isoform in each plant tissue. The sequence is that of Peroxidase 57 (PER57) from Arabidopsis thaliana (Mouse-ear cress).